The chain runs to 338 residues: Heat shock factor 2-binding protein (338 aa).

Residues 1–20 (MAATVGDGSGTEEACRNMES) form a disordered region. Residues 12 to 126 (EEACRNMESK…LLQQAEYCTQ (115 aa)) are a coiled coil. The interaction with BRME1 stretch occupies residues 18 to 55 (MESKEEFVKVRKKDLERLTTEVMQIRDFLPRILNGELL). The interval 87–338 (ARLETAQADS…EDLRALDCNV (252 aa)) is interaction with BRCA2.

In terms of assembly, interacts (via C-terminus) with BNC1. Associates with HSF2. The interaction seems to occur between the trimerization domain of HSF2 and the N-terminal hydrophilic region of HSF2BP. Interacts (via N-terminus) with BRME1. Interacts with BRCA2 and BRME1; the interactions are direct and allow the formation of a ternary complex. The complex BRME1:HSF2BP:BRCA2 interacts with SPATA22, MEIOB and RAD51. Post-translationally, sumoylated by UBE2I in response to MEKK1-mediated stimuli. Expressed in testis and, to a lesser extent, in lung and muscle.

Its subcellular location is the cytoplasm. The protein resides in the chromosome. In terms of biological role, meiotic recombination factor component of recombination bridges involved in meiotic double-strand break repair. Modulates the localization of recombinases DMC1:RAD51 to meiotic double-strand break (DSB) sites through the interaction with BRCA2 and its recruitment during meiotic recombination. Indispensable for the DSB repair, homologous synapsis, and crossover formation that are needed for progression past metaphase I, is essential for spermatogenesis and male fertility. Required for proper recombinase recruitment in female meiosis. Inhibits BNC1 transcriptional activity during spermatogenesis, probably by sequestering it in the cytoplasm. May be involved in modulating HSF2 activation in testis. This Mus musculus (Mouse) protein is Heat shock factor 2-binding protein.